The following is a 198-amino-acid chain: Recombination protein RecR (198 aa).

The C4-type zinc finger occupies 56–71 (CGVCGNVDTSNPCGIC). Positions 79–174 (RSICVVEEVA…RVTQLAHGLP (96 aa)) constitute a Toprim domain.

Belongs to the RecR family.

Functionally, may play a role in DNA repair. It seems to be involved in an RecBC-independent recombinational process of DNA repair. It may act with RecF and RecO. This chain is Recombination protein RecR, found in Novosphingobium aromaticivorans (strain ATCC 700278 / DSM 12444 / CCUG 56034 / CIP 105152 / NBRC 16084 / F199).